A 990-amino-acid polypeptide reads, in one-letter code: Type III restriction-modification enzyme StyLTI Res subunit (990 aa).

The interval 50–545 is helicase-like domain; sequence NIDVKMETGT…GLRLPVDENG (496 aa). Residues 884 to 970 form the VRR-NUC domain; the sequence is LLKYDYPQQV…RQNINVEFAE (87 aa). The tract at residues 913-937 is endonuclease domain; that stretch reads STTPDFVYRIERQDADSVYLLVETK.

The protein belongs to the type III restriction-modification system Res protein family. In terms of assembly, contains two different subunits: Res and Mod. Mg(2+) serves as cofactor. Requires S-adenosyl-L-methionine as cofactor.

It carries out the reaction Endonucleolytic cleavage of DNA to give specific double-stranded fragments with terminal 5'-phosphates.. Functionally, a type III restriction enzyme that recognizes 2 inversely oriented double-stranded sequences 5'-CAGAG-3' and cleaves DNA 25-27 base pairs downstream. After binding to one recognition site undergoes random one-dimensional diffusion along DNA until it collides with a stationary enzyme bound to the second DNA site, which is when DNA cleavage occurs. DNA restriction requires both the Res and Mod subunits. The sequence is that of Type III restriction-modification enzyme StyLTI Res subunit from Salmonella typhimurium (strain LT2 / SGSC1412 / ATCC 700720).